Reading from the N-terminus, the 270-residue chain is Formamidopyrimidine-DNA glycosylase (270 aa).

The Schiff-base intermediate with DNA role is filled by proline 2. The Proton donor role is filled by glutamate 3. The active-site Proton donor; for beta-elimination activity is the lysine 58. DNA contacts are provided by histidine 91, arginine 110, and lysine 151. Residues 236–270 (FVYGRGGEACKVCGTELRNVVLGQRASVFCPRCQR) form an FPG-type zinc finger. Arginine 260 acts as the Proton donor; for delta-elimination activity in catalysis.

Belongs to the FPG family. In terms of assembly, monomer. Requires Zn(2+) as cofactor.

It carries out the reaction Hydrolysis of DNA containing ring-opened 7-methylguanine residues, releasing 2,6-diamino-4-hydroxy-5-(N-methyl)formamidopyrimidine.. The enzyme catalyses 2'-deoxyribonucleotide-(2'-deoxyribose 5'-phosphate)-2'-deoxyribonucleotide-DNA = a 3'-end 2'-deoxyribonucleotide-(2,3-dehydro-2,3-deoxyribose 5'-phosphate)-DNA + a 5'-end 5'-phospho-2'-deoxyribonucleoside-DNA + H(+). In terms of biological role, involved in base excision repair of DNA damaged by oxidation or by mutagenic agents. Acts as a DNA glycosylase that recognizes and removes damaged bases. Has a preference for oxidized purines, such as 7,8-dihydro-8-oxoguanine (8-oxoG). Has AP (apurinic/apyrimidinic) lyase activity and introduces nicks in the DNA strand. Cleaves the DNA backbone by beta-delta elimination to generate a single-strand break at the site of the removed base with both 3'- and 5'-phosphates. This chain is Formamidopyrimidine-DNA glycosylase, found in Pseudomonas fluorescens (strain SBW25).